The chain runs to 136 residues: Large-conductance mechanosensitive channel (136 aa).

A run of 2 helical transmembrane segments spans residues 9–29 (AFAS…GAAF) and 79–99 (IQTV…LKAI).

Belongs to the MscL family. As to quaternary structure, homopentamer.

The protein resides in the cell inner membrane. Its function is as follows. Channel that opens in response to stretch forces in the membrane lipid bilayer. May participate in the regulation of osmotic pressure changes within the cell. This Shewanella putrefaciens (strain CN-32 / ATCC BAA-453) protein is Large-conductance mechanosensitive channel.